Here is a 144-residue protein sequence, read N- to C-terminus: Ribonuclease VapC37 (144 aa).

Residues I3–W137 form the PINc domain. Mg(2+) contacts are provided by D5 and D90.

It belongs to the PINc/VapC protein family. Requires Mg(2+) as cofactor.

Its subcellular location is the secreted. Its function is as follows. Probable toxic component of a type II toxin-antitoxin (TA) system. An RNase. Upon expression in M.smegmatis inhibits colony formation. The putative cognate antitoxin is VapB37. The sequence is that of Ribonuclease VapC37 from Mycobacterium tuberculosis (strain ATCC 25618 / H37Rv).